The following is a 160-amino-acid chain: Urease accessory protein UreE (160 aa).

This sequence belongs to the UreE family.

The protein resides in the cytoplasm. In terms of biological role, involved in urease metallocenter assembly. Binds nickel. Probably functions as a nickel donor during metallocenter assembly. The chain is Urease accessory protein UreE from Acinetobacter baumannii (strain AB307-0294).